Reading from the N-terminus, the 764-residue chain is 5-methyltetrahydropteroyltriglutamate--homocysteine methyltransferase (764 aa).

5-methyltetrahydropteroyltri-L-glutamate-binding positions include Arg-16–Lys-19 and Lys-121. Residues Ile-440 to Ser-442 and Glu-493 each bind L-homocysteine. Residues Ile-440–Ser-442 and Glu-493 each bind L-methionine. 5-methyltetrahydropteroyltri-L-glutamate-binding positions include Arg-524 to Cys-525 and Trp-570. Asp-608 is an L-homocysteine binding site. Asp-608 provides a ligand contact to L-methionine. Glu-614 is a binding site for 5-methyltetrahydropteroyltri-L-glutamate. Zn(2+) is bound by residues His-650, Cys-652, and Glu-674. The active-site Proton donor is His-703. Cys-735 is a binding site for Zn(2+).

It belongs to the vitamin-B12 independent methionine synthase family. Zn(2+) serves as cofactor.

It catalyses the reaction 5-methyltetrahydropteroyltri-L-glutamate + L-homocysteine = tetrahydropteroyltri-L-glutamate + L-methionine. Its pathway is amino-acid biosynthesis; L-methionine biosynthesis via de novo pathway; L-methionine from L-homocysteine (MetE route): step 1/1. Functionally, catalyzes the transfer of a methyl group from 5-methyltetrahydrofolate to homocysteine resulting in methionine formation. The sequence is that of 5-methyltetrahydropteroyltriglutamate--homocysteine methyltransferase from Burkholderia cenocepacia (strain HI2424).